Consider the following 328-residue polypeptide: Solute-binding protein Bamb_6123 (328 aa).

An N-terminal signal peptide occupies residues 1-26 (MTHRFPRSRTALAVALMAGFAMSAQA). 6 residues coordinate beta-D-galacturonate: histidine 35, glutamate 73, arginine 89, arginine 149, asparagine 209, and glutamate 236. Residues histidine 35, glutamate 73, arginine 89, arginine 149, asparagine 209, and glutamate 236 each contribute to the beta-D-glucuronate site.

This sequence belongs to the bacterial solute-binding protein 7 family. As to quaternary structure, the complex is comprised of an extracytoplasmic solute-binding protein and a heteromeric permease formed by two transmembrane proteins.

It localises to the periplasm. Solute-binding protein that binds D-galacturonate and D-glucuronate (in vitro). Probably part of a tripartite ATP-independent periplasmic (TRAP) transport system that mediates solute transport into the cytoplasm. This is Solute-binding protein Bamb_6123 from Burkholderia ambifaria (strain ATCC BAA-244 / DSM 16087 / CCUG 44356 / LMG 19182 / AMMD) (Burkholderia cepacia (strain AMMD)).